A 104-amino-acid chain; its full sequence is MAGRGKVGKGYGKVGAKRHTKKSLKETIMGITKPAIRRLARRGGVKRISSLIYEETRNVLRSFLENVIRDSVTYTEHAKRKTVTALDVVYALKRQGRTLYGFGG.

Positions 1–21 are disordered; sequence MAGRGKVGKGYGKVGAKRHTK.

The protein belongs to the histone H4 family. As to quaternary structure, the nucleosome is a histone octamer containing two molecules each of H2A, H2B, H3 and H4 assembled in one H3-H4 heterotetramer and two H2A-H2B heterodimers. The octamer wraps approximately 147 bp of DNA.

It localises to the nucleus. The protein localises to the chromosome. In terms of biological role, core component of nucleosome. Nucleosomes wrap and compact DNA into chromatin, limiting DNA accessibility to the cellular machineries which require DNA as a template. Histones thereby play a central role in transcription regulation, DNA repair, DNA replication and chromosomal stability. DNA accessibility is regulated via a complex set of post-translational modifications of histones, also called histone code, and nucleosome remodeling. This chain is Histone H4, found in Sterkiella nova (Ciliate).